Consider the following 421-residue polypeptide: Glucose-1-phosphate adenylyltransferase (421 aa).

Residues tyrosine 109, glycine 175, 190–191 (EK), and serine 208 each bind alpha-D-glucose 1-phosphate.

It belongs to the bacterial/plant glucose-1-phosphate adenylyltransferase family. As to quaternary structure, homotetramer.

The catalysed reaction is alpha-D-glucose 1-phosphate + ATP + H(+) = ADP-alpha-D-glucose + diphosphate. Its pathway is glycan biosynthesis; glycogen biosynthesis. Functionally, involved in the biosynthesis of ADP-glucose, a building block required for the elongation reactions to produce glycogen. Catalyzes the reaction between ATP and alpha-D-glucose 1-phosphate (G1P) to produce pyrophosphate and ADP-Glc. The chain is Glucose-1-phosphate adenylyltransferase from Teredinibacter turnerae (strain ATCC 39867 / T7901).